Reading from the N-terminus, the 144-residue chain is MFWGALLSMERPTSVRDLCMSLKLSLLDLSLACKFCGNNITNIEKLLFDKAGFQLIWRENNAFGCCQYCARVCSVVEQCFGSHRHLTSEELVNVTKTLQQLSLRCLGCLSILSEADKELCAELNDFSVVRGKTRGLCSLCRLPP.

2 zinc fingers span residues 33 to 69 (CKFCGNNITNIEKLLFDKAGFQLIWRENNAFGCCQYC) and 105 to 140 (CLGCLSILSEADKELCAELNDFSVVRGKTRGLCSLC).

Belongs to the papillomaviridae E6 protein family. As to quaternary structure, forms homodimers. Interacts with ubiquitin-protein ligase UBE3A/E6-AP; this interaction stimulates UBE3A ubiquitin activity. Interacts with host BAK1.

The protein localises to the host cytoplasm. Its subcellular location is the host nucleus. Its function is as follows. Plays a major role in the induction and maintenance of cellular transformation. E6 associates with host UBE3A/E6-AP ubiquitin-protein ligase and modulates its activity. Protects host keratinocytes from apoptosis by mediating the degradation of host BAK1. May also inhibit host immune response. The protein is Protein E6 of Canine oral papillomavirus (strain Y62) (COPV).